The primary structure comprises 149 residues: UPF0756 membrane protein BBR47_12340 (149 aa).

4 helical membrane passes run I6–A26, P48–G68, I86–P106, and L120–I140.

It belongs to the UPF0756 family.

It is found in the cell membrane. The sequence is that of UPF0756 membrane protein BBR47_12340 from Brevibacillus brevis (strain 47 / JCM 6285 / NBRC 100599).